The following is a 424-amino-acid chain: Serine--tRNA ligase (424 aa).

229–231 serves as a coordination point for L-serine; that stretch reads TAE. An ATP-binding site is contributed by 260–262; it reads RRE. Residue glutamate 283 coordinates L-serine. Residue 347–350 coordinates ATP; it reads EVSS. Residue serine 383 coordinates L-serine.

The protein belongs to the class-II aminoacyl-tRNA synthetase family. Type-1 seryl-tRNA synthetase subfamily. As to quaternary structure, homodimer. The tRNA molecule binds across the dimer.

The protein localises to the cytoplasm. The enzyme catalyses tRNA(Ser) + L-serine + ATP = L-seryl-tRNA(Ser) + AMP + diphosphate + H(+). It catalyses the reaction tRNA(Sec) + L-serine + ATP = L-seryl-tRNA(Sec) + AMP + diphosphate + H(+). It functions in the pathway aminoacyl-tRNA biosynthesis; selenocysteinyl-tRNA(Sec) biosynthesis; L-seryl-tRNA(Sec) from L-serine and tRNA(Sec): step 1/1. In terms of biological role, catalyzes the attachment of serine to tRNA(Ser). Is also able to aminoacylate tRNA(Sec) with serine, to form the misacylated tRNA L-seryl-tRNA(Sec), which will be further converted into selenocysteinyl-tRNA(Sec). The protein is Serine--tRNA ligase of Roseiflexus castenholzii (strain DSM 13941 / HLO8).